Reading from the N-terminus, the 78-residue chain is Probable [Fe-S]-dependent transcriptional repressor (78 aa).

Cys-56, Cys-61, Cys-64, and Cys-70 together coordinate iron-sulfur cluster.

The protein belongs to the FeoC family.

In terms of biological role, may function as a transcriptional regulator that controls feoABC expression. The chain is Probable [Fe-S]-dependent transcriptional repressor from Cronobacter sakazakii (strain ATCC BAA-894) (Enterobacter sakazakii).